The sequence spans 311 residues: 4-hydroxy-tetrahydrodipicolinate synthase (311 aa).

T49 is a pyruvate binding site. The active-site Proton donor/acceptor is Y138. The active-site Schiff-base intermediate with substrate is the K166. I207 lines the pyruvate pocket.

The protein belongs to the DapA family. In terms of assembly, homotetramer; dimer of dimers.

The protein resides in the cytoplasm. It carries out the reaction L-aspartate 4-semialdehyde + pyruvate = (2S,4S)-4-hydroxy-2,3,4,5-tetrahydrodipicolinate + H2O + H(+). Its pathway is amino-acid biosynthesis; L-lysine biosynthesis via DAP pathway; (S)-tetrahydrodipicolinate from L-aspartate: step 3/4. Catalyzes the condensation of (S)-aspartate-beta-semialdehyde [(S)-ASA] and pyruvate to 4-hydroxy-tetrahydrodipicolinate (HTPA). This is 4-hydroxy-tetrahydrodipicolinate synthase from Lactobacillus acidophilus (strain ATCC 700396 / NCK56 / N2 / NCFM).